The chain runs to 379 residues: Putative thylakoid lumen peptidyl-prolyl cis-trans isomerase sll0408 (379 aa).

A signal peptide spans 1–33 (MQIIKTPLGIITRRGLQLSLLSLLLTMLSLTWA). A PPIase cyclophilin-type domain is found at 190–378 (GRATVEMTTN…SGADNLVNGN (189 aa)).

It localises to the cellular thylakoid lumen. It carries out the reaction [protein]-peptidylproline (omega=180) = [protein]-peptidylproline (omega=0). Its function is as follows. PPIases accelerate the folding of proteins. It catalyzes the cis-trans isomerization of proline imidic peptide bonds in oligopeptides. Required for the assembly and stabilization of PSII. This chain is Putative thylakoid lumen peptidyl-prolyl cis-trans isomerase sll0408, found in Synechocystis sp. (strain ATCC 27184 / PCC 6803 / Kazusa).